A 398-amino-acid polypeptide reads, in one-letter code: Bone morphogenetic protein 2-B (398 aa).

Positions 1–23 are cleaved as a signal peptide; it reads MVAGIHSLLLLQFYQILLSGCTG. The propeptide occupies 24–284; that stretch reads LVPEEGKRKY…GHALHKRQKR (261 aa). N-linked (GlcNAc...) asparagine glycans are attached at residues Asn-137, Asn-202, Asn-237, and Asn-340. Cystine bridges form between Cys-298/Cys-363, Cys-327/Cys-395, and Cys-331/Cys-397.

This sequence belongs to the TGF-beta family. In terms of assembly, homodimer; disulfide-linked.

It is found in the secreted. In terms of biological role, induces cartilage and bone formation. The protein is Bone morphogenetic protein 2-B (bmp2-b) of Xenopus laevis (African clawed frog).